Consider the following 144-residue polypeptide: Bacilliredoxin SH1478 (144 aa).

It belongs to the bacilliredoxin family.

The polypeptide is Bacilliredoxin SH1478 (Staphylococcus haemolyticus (strain JCSC1435)).